Here is an 86-residue protein sequence, read N- to C-terminus: UPF0512 protein V (86 aa).

The protein belongs to the UPF0512 family.

This Dictyostelium discoideum (Social amoeba) protein is UPF0512 protein V.